The primary structure comprises 198 residues: Peroxiredoxin-2 (198 aa).

Position 2 is an N-acetylalanine (Ala2). Residues 6-164 (AQIGKSAPDF…ALRLVQAFQY (159 aa)) form the Thioredoxin domain. Ser11 bears the Phosphoserine mark. The active-site Cysteine sulfenic acid (-SOH) intermediate is the Cys51. Ser112 carries the phosphoserine modification. Thr182 carries the post-translational modification Phosphothreonine. Residue Lys196 is modified to N6-acetyllysine.

It belongs to the peroxiredoxin family. AhpC/Prx1 subfamily. In terms of assembly, homodimer; disulfide-linked, upon oxidation. 5 homodimers assemble to form a ring-like decamer. Interacts with TIPIN. Post-translationally, the enzyme can be inactivated by further oxidation of the cysteine sulfenic acid (C(P)-SOH) to sulphinic acid (C(P)-SO2H) instead of its condensation to a disulfide bond. It can be reactivated by forming a transient disulfide bond with sulfiredoxin SRXN1, which reduces the cysteine sulfinic acid in an ATP- and Mg-dependent manner. In terms of processing, acetylation increases resistance to transition to high molecular-mass complexes. Deacetylated by HDAC6 which decreases reducing activity. Widely expressed with highest levels in bone marrow. High levels also found in heart, brain, kidney and skeletal muscle. Lower levels in liver, lung and thymus.

It is found in the cytoplasm. The enzyme catalyses a hydroperoxide + [thioredoxin]-dithiol = an alcohol + [thioredoxin]-disulfide + H2O. In terms of biological role, thiol-specific peroxidase that catalyzes the reduction of hydrogen peroxide and organic hydroperoxides to water and alcohols, respectively. Plays a role in cell protection against oxidative stress by detoxifying peroxides and as sensor of hydrogen peroxide-mediated signaling events. Might participate in the signaling cascades of growth factors and tumor necrosis factor-alpha by regulating the intracellular concentrations of H(2)O(2). This chain is Peroxiredoxin-2 (Prdx2), found in Mus musculus (Mouse).